The following is a 366-amino-acid chain: Chorismate synthase (366 aa).

Positions 48 and 54 each coordinate NADP(+). Residues 125-127, 238-239, glycine 278, 293-297, and arginine 319 each bind FMN; these read RSS, NA, and KPTSS.

This sequence belongs to the chorismate synthase family. As to quaternary structure, homotetramer. It depends on FMNH2 as a cofactor.

The catalysed reaction is 5-O-(1-carboxyvinyl)-3-phosphoshikimate = chorismate + phosphate. Its pathway is metabolic intermediate biosynthesis; chorismate biosynthesis; chorismate from D-erythrose 4-phosphate and phosphoenolpyruvate: step 7/7. In terms of biological role, catalyzes the anti-1,4-elimination of the C-3 phosphate and the C-6 proR hydrogen from 5-enolpyruvylshikimate-3-phosphate (EPSP) to yield chorismate, which is the branch point compound that serves as the starting substrate for the three terminal pathways of aromatic amino acid biosynthesis. This reaction introduces a second double bond into the aromatic ring system. The protein is Chorismate synthase of Neisseria gonorrhoeae (strain NCCP11945).